Consider the following 501-residue polypeptide: MNFRCSSAPLAELGCDGVALGLFSSSWQQQLAALLPAMAAQLQPLLEQREFKAKGGEKHSFSFPGQQPSLVIISGLGEPDSFDGLALRKAAASLALASRGSNLKALALGLPIEAFAPDQALTALMQGCRLALYKDERFRSENKPSLDPGEIVLQGLASELDQQLAQQEAICQGVMLARELVAAPPNVVNALSLESTARSIADQFGCELTVLDEAACRERGMGAYLAVAQGASIPPRFLHLVIRPQGPVKRKLALVGKGLTFDSGGYNLKVGGSQIELMKFDMGGCGAVLGAARTLAELKLEGLEIHVISAATENMVSAEAIYPGAIVTASNGKTIEINNTDAEGRLTLADALVYACGLEPDAIVDLATLTGACVIALGDEIAGYWSPDDGLAQQLNDAAHRAGEGLWRMPLQSSYKDGLKSGLADMKNTGPRPGGSITAALFLKEFVKPEIPWAHIDIAGPVWSDKGRSTDPSGATGYGVRTLVEWCQAVAADAKEGLSQG.

Mn(2+) is bound by residues Lys257 and Asp262. Residue Lys269 is part of the active site. Residues Asp281, Asp341, and Glu343 each contribute to the Mn(2+) site. Arg345 is a catalytic residue.

This sequence belongs to the peptidase M17 family. The cofactor is Mn(2+).

The protein localises to the cytoplasm. It catalyses the reaction Release of an N-terminal amino acid, Xaa-|-Yaa-, in which Xaa is preferably Leu, but may be other amino acids including Pro although not Arg or Lys, and Yaa may be Pro. Amino acid amides and methyl esters are also readily hydrolyzed, but rates on arylamides are exceedingly low.. It carries out the reaction Release of an N-terminal amino acid, preferentially leucine, but not glutamic or aspartic acids.. Its function is as follows. Presumably involved in the processing and regular turnover of intracellular proteins. Catalyzes the removal of unsubstituted N-terminal amino acids from various peptides. This Synechococcus sp. (strain RCC307) protein is Probable cytosol aminopeptidase.